The sequence spans 94 residues: Co-chaperonin GroES (94 aa).

It belongs to the GroES chaperonin family. Heptamer of 7 subunits arranged in a ring. Interacts with the chaperonin GroEL.

It localises to the cytoplasm. Functionally, together with the chaperonin GroEL, plays an essential role in assisting protein folding. The GroEL-GroES system forms a nano-cage that allows encapsulation of the non-native substrate proteins and provides a physical environment optimized to promote and accelerate protein folding. GroES binds to the apical surface of the GroEL ring, thereby capping the opening of the GroEL channel. This Staphylococcus epidermidis protein is Co-chaperonin GroES.